The sequence spans 75 residues: UPF0057 membrane protein At2g24040 (75 aa).

The next 2 membrane-spanning stretches (helical) occupy residues 4–24 (SCELCCEIFIAILLPPVGVCL) and 33–53 (FFICLILTCLGYLPGIIYAIY).

Belongs to the UPF0057 (PMP3) family.

Its subcellular location is the membrane. The sequence is that of UPF0057 membrane protein At2g24040 from Arabidopsis thaliana (Mouse-ear cress).